Reading from the N-terminus, the 593-residue chain is Putative auxin response factor 15 (593 aa).

Residues 126 to 228 constitute a DNA-binding region (TF-B3); the sequence is FTKVLTASDI…ELRVGIRRAR (103 aa). One can recognise a PB1 domain in the interval 511 to 592; sequence RTCTKVQMQG…MVKRIYIQKR (82 aa).

This sequence belongs to the ARF family. Homodimers and heterodimers.

It is found in the nucleus. Functionally, auxin response factors (ARFs) are transcriptional factors that bind specifically to the DNA sequence 5'-TGTCTC-3' found in the auxin-responsive promoter elements (AuxREs). Could act as transcriptional activator or repressor. Formation of heterodimers with Aux/IAA proteins may alter their ability to modulate early auxin response genes expression. This is Putative auxin response factor 15 (ARF15) from Arabidopsis thaliana (Mouse-ear cress).